Reading from the N-terminus, the 251-residue chain is Triosephosphate isomerase (251 aa).

Residue 9 to 11 (NWK) participates in substrate binding. H94 acts as the Electrophile in catalysis. The active-site Proton acceptor is E166. Substrate contacts are provided by residues G172, S211, and 232 to 233 (GG).

Belongs to the triosephosphate isomerase family. Homodimer.

It localises to the cytoplasm. The enzyme catalyses D-glyceraldehyde 3-phosphate = dihydroxyacetone phosphate. The protein operates within carbohydrate biosynthesis; gluconeogenesis. It functions in the pathway carbohydrate degradation; glycolysis; D-glyceraldehyde 3-phosphate from glycerone phosphate: step 1/1. Functionally, involved in the gluconeogenesis. Catalyzes stereospecifically the conversion of dihydroxyacetone phosphate (DHAP) to D-glyceraldehyde-3-phosphate (G3P). The chain is Triosephosphate isomerase from Stenotrophomonas maltophilia (strain K279a).